A 410-amino-acid polypeptide reads, in one-letter code: Arginine biosynthesis bifunctional protein ArgJ (410 aa).

Substrate-binding residues include threonine 158, lysine 184, threonine 195, glutamate 282, asparagine 405, and serine 410. Residue threonine 195 is the Nucleophile of the active site.

This sequence belongs to the ArgJ family. As to quaternary structure, heterotetramer of two alpha and two beta chains.

It localises to the cytoplasm. It carries out the reaction N(2)-acetyl-L-ornithine + L-glutamate = N-acetyl-L-glutamate + L-ornithine. It catalyses the reaction L-glutamate + acetyl-CoA = N-acetyl-L-glutamate + CoA + H(+). The protein operates within amino-acid biosynthesis; L-arginine biosynthesis; L-ornithine and N-acetyl-L-glutamate from L-glutamate and N(2)-acetyl-L-ornithine (cyclic): step 1/1. It functions in the pathway amino-acid biosynthesis; L-arginine biosynthesis; N(2)-acetyl-L-ornithine from L-glutamate: step 1/4. Functionally, catalyzes two activities which are involved in the cyclic version of arginine biosynthesis: the synthesis of N-acetylglutamate from glutamate and acetyl-CoA as the acetyl donor, and of ornithine by transacetylation between N(2)-acetylornithine and glutamate. In Bartonella henselae (strain ATCC 49882 / DSM 28221 / CCUG 30454 / Houston 1) (Rochalimaea henselae), this protein is Arginine biosynthesis bifunctional protein ArgJ.